Here is a 255-residue protein sequence, read N- to C-terminus: ParA family protein TC_0871 (255 aa).

Belongs to the ParA family.

This Chlamydia muridarum (strain MoPn / Nigg) protein is ParA family protein TC_0871.